Reading from the N-terminus, the 299-residue chain is Tyrosine recombinase XerC (299 aa).

A Core-binding (CB) domain is found at M1–N85. The Tyr recombinase domain maps to R106–D285. Active-site residues include R146, K170, H237, R240, and H263. Y272 (O-(3'-phospho-DNA)-tyrosine intermediate) is an active-site residue.

The protein belongs to the 'phage' integrase family. XerC subfamily. In terms of assembly, forms a cyclic heterotetrameric complex composed of two molecules of XerC and two molecules of XerD.

The protein resides in the cytoplasm. In terms of biological role, site-specific tyrosine recombinase, which acts by catalyzing the cutting and rejoining of the recombining DNA molecules. The XerC-XerD complex is essential to convert dimers of the bacterial chromosome into monomers to permit their segregation at cell division. It also contributes to the segregational stability of plasmids. In Pseudomonas putida (strain ATCC 700007 / DSM 6899 / JCM 31910 / BCRC 17059 / LMG 24140 / F1), this protein is Tyrosine recombinase XerC.